Reading from the N-terminus, the 1353-residue chain is Inhibitor of Bruton tyrosine kinase (1353 aa).

2 ANK repeats span residues 51-80 (FGRNALHLVSSCGKKGVLDWLIQKGVDLLV) and 85-114 (SGWTALHRSIFYGHIDCVWSLLKHGVSLYI). 3 RCC1 repeats span residues 141–194 (PTDV…FLSQ), 195–246 (KGQV…VLTE), and 248–301 (GCVY…LWTR). BTB domains lie at 564-644 (HDVT…DFLT) and 768-836 (CDVT…VVIK). Residues 806-835 (SSCAALEMPIHSDILKVILDYLYTDEAVVI) form an ANK 3 repeat. Positions 970-1001 (HSETMFKKAKTKAKKKPRKRSDSSGGYNLSDI) are disordered. A compositionally biased stretch (basic residues) spans 976–988 (KKAKTKAKKKPRK). Serine 990 carries the phosphoserine modification. Positions 992 to 1001 (SSGGYNLSDI) are enriched in polar residues. A phosphoserine mark is found at serine 1004, serine 1030, serine 1033, serine 1039, serine 1045, serine 1054, serine 1083, serine 1111, serine 1113, and serine 1116. The interval 1134-1155 (KCGATPKSHLGKTVSHGVKLSQ) is disordered.

In terms of assembly, interacts with the PH domain of BTK. Isoform 2 does not interact with BTK. Expressed in DeFew, HEK293T, HeLa and in Jurkat, MC3 and NB4 lymphoid cells (at protein level). Isoform 1 is the predominant isoform expressed in all examined tissues and cell lines. Highly expressed in hemopoietic tissues (fetal liver, spleen, lymph node, thymus, peripheral blood leukocytes and bone marrow). Weakly or not expressed in other tissues.

The protein resides in the cytoplasm. The protein localises to the membrane. It localises to the nucleus. Its function is as follows. Acts as an inhibitor of BTK tyrosine kinase activity, thereby playing a role in B-cell development. Down-regulates BTK kinase activity, leading to interference with BTK-mediated calcium mobilization and NF-kappa-B-driven transcription. This chain is Inhibitor of Bruton tyrosine kinase (IBTK), found in Homo sapiens (Human).